Here is a 147-residue protein sequence, read N- to C-terminus: Myosin regulatory light chain (147 aa).

Threonine 1 is subject to N-acetylthreonine. EF-hand domains follow at residues 2 to 37 (ASAD…LGKN), 73 to 108 (EQSK…LGDA), and 109 to 144 (LTSS…GYPL). Aspartate 15, aspartate 17, aspartate 19, lysine 21, glutamate 26, aspartate 86, asparagine 90, threonine 92, and glutamate 97 together coordinate Ca(2+).

This is Myosin regulatory light chain from Physarum polycephalum (Slime mold).